The sequence spans 574 residues: ATP-dependent lipid A-core flippase (574 aa).

The next 4 helical transmembrane spans lie at 11 to 31, 60 to 80, 156 to 176, and 244 to 264; these read LLSYLKPYWGIALLVLVGFGI, WFPLLIVLLVFFRGLGLFMGG, YTNWRLTLCIFIFMPIIGVLV, and LNSPLVQLVMAMAMSLIVWLA. The 282-residue stretch at 23 to 304 folds into the ABC transmembrane type-1 domain; the sequence is LLVLVGFGIN…LTDVNEKLQR (282 aa). The 236-residue stretch at 335–570 folds into the ABC transporter domain; sequence VRFDHVTLEY…QGAYFQLHQR (236 aa). 368 to 375 lines the ATP pocket; that stretch reads GRSGAGKT.

This sequence belongs to the ABC transporter superfamily. Lipid exporter (TC 3.A.1.106) family. As to quaternary structure, homodimer.

It localises to the cell inner membrane. It carries out the reaction ATP + H2O + lipid A-core oligosaccharideSide 1 = ADP + phosphate + lipid A-core oligosaccharideSide 2.. In terms of biological role, involved in lipopolysaccharide (LPS) biosynthesis. Translocates lipid A-core from the inner to the outer leaflet of the inner membrane. Transmembrane domains (TMD) form a pore in the inner membrane and the ATP-binding domain (NBD) is responsible for energy generation. The protein is ATP-dependent lipid A-core flippase of Acinetobacter baylyi (strain ATCC 33305 / BD413 / ADP1).